The chain runs to 259 residues: Major cell-binding factor (259 aa).

The N-terminal stretch at 1 to 26 is a signal peptide; sequence MVFRKSLLKLAVFALGACVAFSNANA.

This sequence belongs to the bacterial solute-binding protein 3 family.

It localises to the cell surface. Common antigen and a major cell adherence molecule. Most probably involved, with PEB1C, in a binding-protein-dependent transport system for an amino acid. May be involved in binding to intestinal cells. In Campylobacter jejuni subsp. jejuni serotype O:23/36 (strain 81-176), this protein is Major cell-binding factor (peb1A).